A 545-amino-acid chain; its full sequence is External NADH-ubiquinone oxidoreductase 2, mitochondrial (545 aa).

Residues 1–21 constitute a mitochondrion transit peptide; that stretch reads MLPRLGFARTARSIHRFKMTQ. 99–129 contributes to the FAD binding site; that stretch reads ELVILGTGWGAISLLKKLDTSLYNVTVVSPR. Residue 260-296 coordinates NAD(+); that stretch reads LTFVVVGGGPTGVEFAAELQDYINQDLRKWMPDLSKE.

The protein belongs to the NADH dehydrogenase family.

It is found in the mitochondrion intermembrane space. It carries out the reaction a quinone + NADH + H(+) = a quinol + NAD(+). It catalyses the reaction a ubiquinone + NADH + H(+) = a ubiquinol + NAD(+). Functionally, external NADH dehydrogenase required for optimum cellular growth with a number of nonfermentable carbon sources, including ethanol. With NDE1, performes the mitochondrial oxidation of cytosolic NADH under these growth conditions. Regulates the mitochondrial glycerol-3-phosphate dehydrogenase, GUT2, also involved in cytosolic NADH oxidation. This is External NADH-ubiquinone oxidoreductase 2, mitochondrial (NDE2) from Saccharomyces cerevisiae (strain ATCC 204508 / S288c) (Baker's yeast).